The following is a 301-amino-acid chain: UDP-3-O-acyl-N-acetylglucosamine deacetylase (301 aa).

The Zn(2+) site is built by histidine 81, histidine 237, and aspartate 241. Histidine 264 (proton donor) is an active-site residue.

The protein belongs to the LpxC family. Requires Zn(2+) as cofactor.

It catalyses the reaction a UDP-3-O-[(3R)-3-hydroxyacyl]-N-acetyl-alpha-D-glucosamine + H2O = a UDP-3-O-[(3R)-3-hydroxyacyl]-alpha-D-glucosamine + acetate. Its pathway is glycolipid biosynthesis; lipid IV(A) biosynthesis; lipid IV(A) from (3R)-3-hydroxytetradecanoyl-[acyl-carrier-protein] and UDP-N-acetyl-alpha-D-glucosamine: step 2/6. Its function is as follows. Catalyzes the hydrolysis of UDP-3-O-myristoyl-N-acetylglucosamine to form UDP-3-O-myristoylglucosamine and acetate, the committed step in lipid A biosynthesis. In Leptospira interrogans serogroup Icterohaemorrhagiae serovar copenhageni (strain Fiocruz L1-130), this protein is UDP-3-O-acyl-N-acetylglucosamine deacetylase.